A 70-amino-acid chain; its full sequence is MAFLKKSLFLVLFLGLVSLSICEKEKRQNEEDEDENEAANHEEGSEEKRGLFDIVKKIAGHIAGSIGKKR.

The N-terminal stretch at 1-22 (MAFLKKSLFLVLFLGLVSLSIC) is a signal peptide. A propeptide spanning residues 23-49 (EKEKRQNEEDEDENEAANHEEGSEEKR) is cleaved from the precursor. The interval 27–48 (RQNEEDEDENEAANHEEGSEEK) is disordered. A compositionally biased stretch (basic and acidic residues) spans 38-48 (AANHEEGSEEK). Ile-66 carries the post-translational modification Isoleucine amide.

As to expression, expressed by the skin dorsal glands.

It localises to the secreted. The protein localises to the target cell membrane. Its function is as follows. Amphipathic alpha-helical antimicrobial peptide with weak to potent activity against Gram-positive bacteria, and no activity against Gram-negative bacteria. Probably acts by disturbing membrane functions with its amphipathic structure. Shows anticancer activity. The polypeptide is Aurein-3.1 (Ranoidea aurea (Green and golden bell frog)).